A 682-amino-acid chain; its full sequence is Potassium-transporting ATPase ATP-binding subunit (682 aa).

Transmembrane regions (helical) follow at residues 34-54 (PVMFVVWAGSVLTTLLTLAMV), 58-78 (IAGSALFTGVISLWLWFTVLF), 219-239 (IALTILLIALTIVFLLATATL), and 254-274 (VLVALLVCLIPTTIGGLLSAI). Catalysis depends on Asp-307, which acts as the 4-aspartylphosphate intermediate. ATP is bound by residues Asp-344, Glu-348, 377–384 (FTAQSRMS), and Lys-395. Asp-518 and Asp-522 together coordinate Mg(2+). Transmembrane regions (helical) follow at residues 588–608 (FAIIPAAFAATYPQLNALNVM), 616–636 (AILSAVIFNALIIIFLIPLAL), and 662–682 (LVVPFIGIKVIDVLLTLLGLA).

Belongs to the cation transport ATPase (P-type) (TC 3.A.3) family. Type IA subfamily. As to quaternary structure, the system is composed of three essential subunits: KdpA, KdpB and KdpC.

Its subcellular location is the cell inner membrane. The catalysed reaction is K(+)(out) + ATP + H2O = K(+)(in) + ADP + phosphate + H(+). In terms of biological role, part of the high-affinity ATP-driven potassium transport (or Kdp) system, which catalyzes the hydrolysis of ATP coupled with the electrogenic transport of potassium into the cytoplasm. This subunit is responsible for energy coupling to the transport system and for the release of the potassium ions to the cytoplasm. In Salmonella paratyphi B (strain ATCC BAA-1250 / SPB7), this protein is Potassium-transporting ATPase ATP-binding subunit.